A 236-amino-acid chain; its full sequence is 1-(5-phosphoribosyl)-5-[(5-phosphoribosylamino)methylideneamino] imidazole-4-carboxamide isomerase (236 aa).

Asp-8 serves as the catalytic Proton acceptor. The active-site Proton donor is Asp-129.

The protein belongs to the HisA/HisF family.

The protein resides in the cytoplasm. It carries out the reaction 1-(5-phospho-beta-D-ribosyl)-5-[(5-phospho-beta-D-ribosylamino)methylideneamino]imidazole-4-carboxamide = 5-[(5-phospho-1-deoxy-D-ribulos-1-ylimino)methylamino]-1-(5-phospho-beta-D-ribosyl)imidazole-4-carboxamide. Its pathway is amino-acid biosynthesis; L-histidine biosynthesis; L-histidine from 5-phospho-alpha-D-ribose 1-diphosphate: step 4/9. This Ruminiclostridium cellulolyticum (strain ATCC 35319 / DSM 5812 / JCM 6584 / H10) (Clostridium cellulolyticum) protein is 1-(5-phosphoribosyl)-5-[(5-phosphoribosylamino)methylideneamino] imidazole-4-carboxamide isomerase.